The sequence spans 295 residues: Phosphoserine phosphatase, chloroplastic (295 aa).

Residues 1–54 constitute a chloroplast transit peptide; the sequence is MEALTTSRVVPVQVPCRKLSSLFANFSCLELRRYPCRGLVSIMNHPKLLRPVTA. D89 (nucleophile) is an active-site residue. Mg(2+) contacts are provided by D89 and D91. D91 acts as the Proton donor in catalysis. Residues E98, R134, 178 to 179, and K227 each bind substrate; that span reads SG. A Mg(2+)-binding site is contributed by D248.

The protein belongs to the HAD-like hydrolase superfamily. SerB family. It depends on Mg(2+) as a cofactor. As to expression, ubiquitous. Mainly expressed in shoot and root meristems, vasculature, pollen, anthers, carpels and seeds.

It localises to the plastid. The protein resides in the chloroplast. The enzyme catalyses O-phospho-L-serine + H2O = L-serine + phosphate. It catalyses the reaction O-phospho-D-serine + H2O = D-serine + phosphate. The protein operates within amino-acid biosynthesis; L-serine biosynthesis; L-serine from 3-phospho-D-glycerate: step 3/3. Approximately 60% inhibition of PSP activity is observed in presence of 10 mM serine. Catalyzes the last step in the plastidial phosphorylated pathway of serine biosynthesis (PPSB). The reaction mechanism proceeds via the formation of a phosphoryl-enzyme intermediates. Required for embryo, pollen and root development. May be required preferentially for serine biosynthesis in non-photosynthetic tissues. This chain is Phosphoserine phosphatase, chloroplastic (PSP), found in Arabidopsis thaliana (Mouse-ear cress).